Here is a 330-residue protein sequence, read N- to C-terminus: Basic leucine zipper 2 (330 aa).

The disordered stretch occupies residues 1-207; the sequence is MAQLPPKIPT…NRQSAQRSRV (207 aa). Over residues 21-34 the composition is skewed to basic residues; the sequence is GHHHHAAHGHHHQR. The segment covering 45-56 has biased composition (pro residues); sequence PLPPFPLPPPAP. Low complexity-rich tracts occupy residues 57-72 and 139-151; these read ANGG…QHQP and QPAA…SSPS. Basic and acidic residues predominate over residues 155–166; that stretch reads SMNDEKQDKGET. One can recognise a bZIP domain in the interval 188–244; the sequence is DPKRVKRILANRQSAQRSRVRKLQYISELERSVTSLQTEVSALSPRVAFLDHQRSLL. The tract at residues 190-209 is basic motif; sequence KRVKRILANRQSAQRSRVRK. The segment at 216–244 is leucine-zipper; the sequence is LERSVTSLQTEVSALSPRVAFLDHQRSLL. Residues 267-330 form a disordered region; it reads GGTEEGDREA…LVIGRDPDAL (64 aa).

As to expression, expressed in roots, shoots and panicles.

Its subcellular location is the nucleus. Functionally, transcription regulator. The chain is Basic leucine zipper 2 (BZIP02) from Oryza sativa subsp. japonica (Rice).